We begin with the raw amino-acid sequence, 119 residues long: Small ribosomal subunit protein uS13 (119 aa).

Residues G94–R113 are compositionally biased toward basic residues. Positions G94–K119 are disordered.

This sequence belongs to the universal ribosomal protein uS13 family. As to quaternary structure, part of the 30S ribosomal subunit. Forms a loose heterodimer with protein S19. Forms two bridges to the 50S subunit in the 70S ribosome.

Functionally, located at the top of the head of the 30S subunit, it contacts several helices of the 16S rRNA. In the 70S ribosome it contacts the 23S rRNA (bridge B1a) and protein L5 of the 50S subunit (bridge B1b), connecting the 2 subunits; these bridges are implicated in subunit movement. Contacts the tRNAs in the A and P-sites. The polypeptide is Small ribosomal subunit protein uS13 (Nitrosomonas europaea (strain ATCC 19718 / CIP 103999 / KCTC 2705 / NBRC 14298)).